We begin with the raw amino-acid sequence, 389 residues long: Sulfate adenylyltransferase (389 aa).

Belongs to the sulfate adenylyltransferase family.

It catalyses the reaction sulfate + ATP + H(+) = adenosine 5'-phosphosulfate + diphosphate. Its pathway is sulfur metabolism; hydrogen sulfide biosynthesis; sulfite from sulfate: step 1/3. The polypeptide is Sulfate adenylyltransferase (Deinococcus deserti (strain DSM 17065 / CIP 109153 / LMG 22923 / VCD115)).